Consider the following 91-residue polypeptide: CLAVATA3/ESR (CLE)-related protein 27 (91 aa).

Residues 1–35 (MTHAREWRSSLTTTLLMVILLSYMLHLFCVYSRVG) form the signal peptide. A hydroxyproline mark is found at proline 83 and proline 86. A glycan (O-linked (Ara...) hydroxyproline) is linked at proline 86.

Belongs to the CLV3/ESR signal peptide family. The O-glycosylation (arabinosylation) of the hydroxyproline Pro-86 enhances binding affinity of the CLE27p peptide for its receptor. In terms of tissue distribution, mostly expressed in apex, and, to a lower extent, in roots, leaves, flowers and siliques.

The protein localises to the secreted. It is found in the extracellular space. Its function is as follows. Extracellular signal peptide that regulates cell fate. Represses root apical meristem maintenance. This chain is CLAVATA3/ESR (CLE)-related protein 27, found in Arabidopsis thaliana (Mouse-ear cress).